A 62-amino-acid polypeptide reads, in one-letter code: DNA-binding protein 7b (62 aa).

The protein belongs to the 7 kDa DNA-binding/endoribonuclease P2 family. As to quaternary structure, monomer.

The protein resides in the cytoplasm. Can constrain negative DNA supercoils. May be involved in maintaining the integrity of the genome at high temperature. The chain is DNA-binding protein 7b from Acidianus hospitalis (strain W1).